A 417-amino-acid chain; its full sequence is GTP-binding protein YPT11 (417 aa).

The interval 1 to 34 (MSQRKRYSLNVVTSPSIPSPTPSAPIRTNESNWE) is disordered. Residues 97–104 (GDANVGKT), 228–232 (DTAGQ), and 292–295 (NKID) each bind GTP. 2 S-geranylgeranyl cysteine lipidation sites follow: Cys-415 and Cys-416.

The protein belongs to the small GTPase superfamily. Rab family. Interacts with MYO2 (via C-terminal tail domain). Interacts with YIF1, YIP3, YIP4 and YIP5.

The protein localises to the endoplasmic reticulum membrane. It is found in the bud tip. It localises to the bud neck. Functionally, involved in the positive control of both endoplasmic reticulum (ER) and mitochondrion inheritance during cell divison. Required for the MYO2-dependent retention of newly inherited mitochondria at the bud tip in developing daughter cells. This chain is GTP-binding protein YPT11 (YPT11), found in Saccharomyces cerevisiae (strain RM11-1a) (Baker's yeast).